Here is a 457-residue protein sequence, read N- to C-terminus: ATP-dependent protease ATPase subunit HslU (457 aa).

ATP contacts are provided by residues valine 21, 63 to 68 (GVGKTE), aspartate 269, glutamate 335, and arginine 407.

It belongs to the ClpX chaperone family. HslU subfamily. As to quaternary structure, a double ring-shaped homohexamer of HslV is capped on each side by a ring-shaped HslU homohexamer. The assembly of the HslU/HslV complex is dependent on binding of ATP.

Its subcellular location is the cytoplasm. Functionally, ATPase subunit of a proteasome-like degradation complex; this subunit has chaperone activity. The binding of ATP and its subsequent hydrolysis by HslU are essential for unfolding of protein substrates subsequently hydrolyzed by HslV. HslU recognizes the N-terminal part of its protein substrates and unfolds these before they are guided to HslV for hydrolysis. This is ATP-dependent protease ATPase subunit HslU from Desulfotalea psychrophila (strain LSv54 / DSM 12343).